Here is a 104-residue protein sequence, read N- to C-terminus: L-rhamnose mutarotase (104 aa).

Y18 provides a ligand contact to substrate. H22 (proton donor) is an active-site residue. Residues Y41 and 76–77 (WW) contribute to the substrate site.

The protein belongs to the rhamnose mutarotase family. As to quaternary structure, homodimer.

The protein localises to the cytoplasm. It carries out the reaction alpha-L-rhamnose = beta-L-rhamnose. The protein operates within carbohydrate metabolism; L-rhamnose metabolism. Its function is as follows. Involved in the anomeric conversion of L-rhamnose. The protein is L-rhamnose mutarotase of Klebsiella pneumoniae subsp. pneumoniae (strain ATCC 700721 / MGH 78578).